The following is a 173-amino-acid chain: Superoxide dismutase [Cu-Zn] (173 aa).

The N-terminal stretch at 1-19 (MKSLFIASTMVLMAFPAFA) is a signal peptide. 3 residues coordinate Cu cation: histidine 67, histidine 69, and histidine 92. Residues cysteine 74 and cysteine 169 are joined by a disulfide bond. Residues histidine 92, histidine 101, histidine 109, and aspartate 112 each coordinate Zn(2+). Residue histidine 147 participates in Cu cation binding.

The protein belongs to the Cu-Zn superoxide dismutase family. In terms of assembly, homodimer. Cu cation is required as a cofactor. Requires Zn(2+) as cofactor.

The protein resides in the periplasm. It carries out the reaction 2 superoxide + 2 H(+) = H2O2 + O2. In terms of biological role, destroys radicals which are normally produced within the cells and which are toxic to biological systems. In Brucella abortus biovar 1 (strain 9-941), this protein is Superoxide dismutase [Cu-Zn] (sodC).